A 314-amino-acid polypeptide reads, in one-letter code: Methionyl-tRNA formyltransferase (314 aa).

110-113 (SLLP) contacts (6S)-5,6,7,8-tetrahydrofolate.

It belongs to the Fmt family.

It catalyses the reaction L-methionyl-tRNA(fMet) + (6R)-10-formyltetrahydrofolate = N-formyl-L-methionyl-tRNA(fMet) + (6S)-5,6,7,8-tetrahydrofolate + H(+). Its function is as follows. Attaches a formyl group to the free amino group of methionyl-tRNA(fMet). The formyl group appears to play a dual role in the initiator identity of N-formylmethionyl-tRNA by promoting its recognition by IF2 and preventing the misappropriation of this tRNA by the elongation apparatus. The chain is Methionyl-tRNA formyltransferase from Dichelobacter nodosus (strain VCS1703A).